The primary structure comprises 417 residues: Lissencephaly-1 homolog (417 aa).

Positions 7–39 constitute a LisH domain; that stretch reads QKEELNGAILDYFDSSGYKLTSTEFTKETNIEL. The stretch at 52–80 forms a coiled coil; sequence TSVIRLQKKVMDLEAKVSQLEEELNNGGR. The interval 72–93 is disordered; the sequence is EEELNNGGRGPARRGKEDALPR. WD repeat units follow at residues 102–143, 144–185, 186–225, 228–267, 270–339, 342–383, and 385–417; these read GHRN…RTLK, GHTN…KTLH, GHDH…CTKT, GHED…CLLT, EHSH…CLQT, GHDN…KTIN, and AHSH…WKLG.

This sequence belongs to the WD repeat LIS1/nudF family.

It localises to the cytoplasm. Its subcellular location is the cytoskeleton. The protein resides in the microtubule organizing center. It is found in the centrosome. Positively regulates the activity of the minus-end directed microtubule motor protein dynein. May enhance dynein-mediated microtubule sliding by targeting dynein to the microtubule plus end. Required for several dynein- and microtubule-dependent processes. This is Lissencephaly-1 homolog from Heterostelium pallidum (strain ATCC 26659 / Pp 5 / PN500) (Cellular slime mold).